We begin with the raw amino-acid sequence, 186 residues long: Bilin biosynthesis protein CpeZ (186 aa).

In terms of biological role, involved in the biosynthesis of bilin. The polypeptide is Bilin biosynthesis protein CpeZ (cpeZ) (Synechococcus sp. (strain WH8020)).